The sequence spans 250 residues: Ribonucleotide monophosphatase NagD (250 aa).

Mg(2+) contacts are provided by Asp9 and Asp11. Asp11 is an active-site residue. Substrate is bound by residues Asp11, 42-43 (TN), and Lys176. Asp201 is a Mg(2+) binding site. 202–205 (NLRT) contributes to the substrate binding site.

It belongs to the HAD-like hydrolase superfamily. NagD family. As to quaternary structure, monomer. It depends on Mg(2+) as a cofactor. Requires Mn(2+) as cofactor. The cofactor is Co(2+). Zn(2+) serves as cofactor.

It catalyses the reaction a ribonucleoside 5'-phosphate + H2O = a ribonucleoside + phosphate. Its function is as follows. Catalyzes the dephosphorylation of an unusually broad range of substrate including deoxyribo- and ribonucleoside tri-, di-, and monophosphates, as well as polyphosphate and glucose-1-P (Glu1P). This Escherichia coli O157:H7 protein is Ribonucleotide monophosphatase NagD (nagD).